The primary structure comprises 298 residues: Lipoyl synthase (298 aa).

[4Fe-4S] cluster-binding residues include Cys-40, Cys-45, Cys-51, Cys-67, Cys-71, Cys-74, and Ser-280. Positions 53 to 269 (AVRRTATFMI…KEIAMQKGFS (217 aa)) constitute a Radical SAM core domain.

Belongs to the radical SAM superfamily. Lipoyl synthase family. It depends on [4Fe-4S] cluster as a cofactor.

It is found in the cytoplasm. The enzyme catalyses [[Fe-S] cluster scaffold protein carrying a second [4Fe-4S](2+) cluster] + N(6)-octanoyl-L-lysyl-[protein] + 2 oxidized [2Fe-2S]-[ferredoxin] + 2 S-adenosyl-L-methionine + 4 H(+) = [[Fe-S] cluster scaffold protein] + N(6)-[(R)-dihydrolipoyl]-L-lysyl-[protein] + 4 Fe(3+) + 2 hydrogen sulfide + 2 5'-deoxyadenosine + 2 L-methionine + 2 reduced [2Fe-2S]-[ferredoxin]. The protein operates within protein modification; protein lipoylation via endogenous pathway; protein N(6)-(lipoyl)lysine from octanoyl-[acyl-carrier-protein]. Functionally, catalyzes the radical-mediated insertion of two sulfur atoms into the C-6 and C-8 positions of the octanoyl moiety bound to the lipoyl domains of lipoate-dependent enzymes, thereby converting the octanoylated domains into lipoylated derivatives. This chain is Lipoyl synthase, found in Bacillus subtilis (strain 168).